Consider the following 555-residue polypeptide: MFS-type transporter VdtG (555 aa).

The disordered stretch occupies residues 1–20; it reads MNGNGTADKPGPPGGKPFGP. An N-linked (GlcNAc...) asparagine glycan is attached at N4. 3 consecutive transmembrane segments (helical) span residues 30-50, 71-91, and 101-121; these read TGFK…LTAL, DIGW…LLFG, and WVFL…GAAP. N122 is a glycosylation site (N-linked (GlcNAc...) asparagine). A run of 2 helical transmembrane segments spans residues 132–152 and 162–182; these read IAGL…FFTV and GIAG…GGGF. An N-linked (GlcNAc...) asparagine glycan is attached at N185. Transmembrane regions (helical) follow at residues 190–210, 232–252, 262–282, and 304–324; these read WCFY…LLFL, LGNL…QWGG, IVAL…VQLW, and AFTI…PIWF. N329 is a glycosylation site (N-linked (GlcNAc...) asparagine). 5 helical membrane passes run 337–357, 364–384, 393–413, 425–445, and 497–517; these read VMML…GFII, TPFM…LTTF, WIGY…QASL, PIGI…FLAV, and LMDV…AAAF. Residues 528 to 555 form a disordered region; the sequence is AAGPGGPGGPGGPGGPGGPEGLRGGNKV. Over residues 530 to 555 the composition is skewed to gly residues; sequence GPGGPGGPGGPGGPGGPEGLRGGNKV.

The protein belongs to the major facilitator superfamily. TCR/Tet family.

The protein localises to the endoplasmic reticulum membrane. In terms of biological role, MFS-type transporter; part of the gene cluster that mediates the biosynthesis of viriditoxin, one of the 'classical' secondary metabolites produced by fungi and that has antibacterial activity. Is not essential for viriditoxin production. This is MFS-type transporter VdtG from Byssochlamys spectabilis (Paecilomyces variotii).